The chain runs to 297 residues: Phosphoribosylaminoimidazole-succinocarboxamide synthase (297 aa).

The protein belongs to the SAICAR synthetase family.

The enzyme catalyses 5-amino-1-(5-phospho-D-ribosyl)imidazole-4-carboxylate + L-aspartate + ATP = (2S)-2-[5-amino-1-(5-phospho-beta-D-ribosyl)imidazole-4-carboxamido]succinate + ADP + phosphate + 2 H(+). It functions in the pathway purine metabolism; IMP biosynthesis via de novo pathway; 5-amino-1-(5-phospho-D-ribosyl)imidazole-4-carboxamide from 5-amino-1-(5-phospho-D-ribosyl)imidazole-4-carboxylate: step 1/2. The polypeptide is Phosphoribosylaminoimidazole-succinocarboxamide synthase (Mycobacterium marinum (strain ATCC BAA-535 / M)).